The following is a 450-amino-acid chain: Divalent metal cation transporter MntH (450 aa).

Transmembrane regions (helical) follow at residues 34-54 (LSFLGPGLLVAGGYMDSGNWI), 59-81 (GGAQYGYTLLFGNLISRLSAMLL), 108-128 (IAIIFWIIAELAIIATDIAEV), 141-161 (IPLIVGALITVLDVFLLLFIM), 170-190 (AIVGTLIFTVLFIFIFEVYIS), 212-232 (GILYIALGIIGATIMPHNLYL), 263-283 (IQLSIAFVVNCLLLVLGASLF), 305-325 (PVLGATMGAIMSTLFAVALLA), 361-381 (SLAVIPVIVCLIIFKGNAAKI), 383-403 (QLLVFSQVFLSIALPFCLIPL), and 422-442 (VNIISWTLIIILSILNVYLIV).

Belongs to the NRAMP family.

The protein localises to the cell membrane. H(+)-stimulated, divalent metal cation uptake system. The protein is Divalent metal cation transporter MntH of Staphylococcus aureus (strain MRSA252).